The sequence spans 134 residues: Lymphocyte antigen 6 complex locus protein G6d (134 aa).

Residues 1 to 19 form the signal peptide; sequence MNSQLIGILFSALLGAALG. The 100-residue stretch at 22 to 121 folds into the UPAR/Ly6 domain; the sequence is MRCYDCGGGP…ASSSTPLCIL (100 aa). 5 cysteine pairs are disulfide-bonded: Cys-24–Cys-48, Cys-27–Cys-35, Cys-42–Cys-76, Cys-82–Cys-101, and Cys-102–Cys-107. Thr-68 carries O-linked (GalNAc...) threonine glycosylation. Asn-108 carries GPI-anchor amidated asparagine lipidation. A propeptide spans 109–134 (removed in mature form); the sequence is GAVASSSTPLCILAAVTTLAWLLSGQ.

In terms of assembly, homodimer. O-glycosylated.

The protein localises to the cell membrane. In Rattus norvegicus (Rat), this protein is Lymphocyte antigen 6 complex locus protein G6d (Ly6g6d).